The chain runs to 240 residues: Homeobox protein notochord (240 aa).

A compositionally biased stretch (polar residues) spans 1 to 13 (MSSPAPSGTQVQP). 2 disordered regions span residues 1–21 (MSSPAPSGTQVQPGSLRPCPG) and 208–240 (QKLKLPSSSVMEEPSSSSDGNIQSEDAELGIGS). The segment at residues 149 to 208 (TKRVRTTFNLQQLQELEKVFAKQHNLVGKERAQLAARLHLTENQVRIWFQNRRVKYQKQQ) is a DNA-binding region (homeobox). Positions 213-225 (PSSSVMEEPSSSS) are enriched in low complexity.

Its subcellular location is the nucleus. Transcription factor that controls node morphogenesis. Acts downstream of both FOXA2 and Brachyury (T) during notochord development. Is essential for cilia formation in the posterior notochord (PNC) and for left-right patterning; acts upstream of FOXJ1 and RFX3 in this process and is required for the expression of various components important for axonemal assembly and function. Plays a role in regulating axial versus paraxial cell fate. Activates the transcription of ciliary proteins C11orf97 homolog, FAM183B and SPACA9 in the embryonic ventral node. The chain is Homeobox protein notochord (Noto) from Mus musculus (Mouse).